Reading from the N-terminus, the 331-residue chain is Ferrochelatase (331 aa).

The Fe cation site is built by His187 and Glu286.

The protein belongs to the ferrochelatase family.

Its subcellular location is the cytoplasm. It carries out the reaction heme b + 2 H(+) = protoporphyrin IX + Fe(2+). It participates in porphyrin-containing compound metabolism; protoheme biosynthesis; protoheme from protoporphyrin-IX: step 1/1. Its function is as follows. Catalyzes the ferrous insertion into protoporphyrin IX. This Legionella pneumophila (strain Paris) protein is Ferrochelatase.